A 359-amino-acid chain; its full sequence is Serpentine receptor class epsilon-33 (359 aa).

A run of 7 helical transmembrane segments spans residues Val29–Ser49, Ile65–Ile85, Tyr134–Ile156, Pro168–Phe188, Leu194–Val214, Leu255–Tyr275, and Leu285–Ile305.

Belongs to the nematode receptor-like protein sre family.

Its subcellular location is the membrane. This is Serpentine receptor class epsilon-33 (sre-33) from Caenorhabditis elegans.